We begin with the raw amino-acid sequence, 171 residues long: UPF0398 protein stu0232 (171 aa).

This sequence belongs to the UPF0398 family.

This is UPF0398 protein stu0232 from Streptococcus thermophilus (strain ATCC BAA-250 / LMG 18311).